The sequence spans 170 residues: Peptide deformylase 1 (170 aa).

Positions 91 and 133 each coordinate Fe cation. Glu-134 is a catalytic residue. Residue His-137 coordinates Fe cation.

The protein belongs to the polypeptide deformylase family. Requires Fe(2+) as cofactor.

It carries out the reaction N-terminal N-formyl-L-methionyl-[peptide] + H2O = N-terminal L-methionyl-[peptide] + formate. In terms of biological role, removes the formyl group from the N-terminal Met of newly synthesized proteins. Requires at least a dipeptide for an efficient rate of reaction. N-terminal L-methionine is a prerequisite for activity but the enzyme has broad specificity at other positions. This chain is Peptide deformylase 1, found in Vibrio vulnificus (strain CMCP6).